Reading from the N-terminus, the 305-residue chain is ATP synthase gamma chain (305 aa).

Belongs to the ATPase gamma chain family. As to quaternary structure, F-type ATPases have 2 components, CF(1) - the catalytic core - and CF(0) - the membrane proton channel. CF(1) has five subunits: alpha(3), beta(3), gamma(1), delta(1), epsilon(1). CF(0) has three main subunits: a, b and c.

It is found in the cell membrane. Produces ATP from ADP in the presence of a proton gradient across the membrane. The gamma chain is believed to be important in regulating ATPase activity and the flow of protons through the CF(0) complex. This is ATP synthase gamma chain from Streptomyces avermitilis (strain ATCC 31267 / DSM 46492 / JCM 5070 / NBRC 14893 / NCIMB 12804 / NRRL 8165 / MA-4680).